We begin with the raw amino-acid sequence, 86 residues long: Centromere protein W (86 aa).

This sequence belongs to the CENP-W/WIP1 family. Heterodimer with CENPT; this dimer coassembles with CENPS-CENPX heterodimers at centromeres to form the tetrameric CENP-T-W-S-X complex, which is a subcomplex of the large constitutive centromere-associated network (CCAN, also known as the interphase centromere complex or ICEN). Interacts with NPM1.

It is found in the nucleus. It localises to the chromosome. Its subcellular location is the centromere. The protein resides in the kinetochore. The protein localises to the nucleus matrix. It is found in the nucleolus. In terms of biological role, component of the CENPA-NAC (nucleosome-associated) complex, a complex that plays a central role in assembly of kinetochore proteins, mitotic progression and chromosome segregation. The CENPA-NAC complex recruits the CENPA-CAD (nucleosome distal) complex and may be involved in incorporation of newly synthesized CENPA into centromeres. Part of a nucleosome-associated complex that binds specifically to histone H3-containing nucleosomes at the centromere, as opposed to nucleosomes containing CENPA. Component of the heterotetrameric CENP-T-W-S-X complex that binds and supercoils DNA, and plays an important role in kinetochore assembly. CENPW has a fundamental role in kinetochore assembly and function. It is one of the inner kinetochore proteins, with most further proteins binding downstream. Required for normal chromosome organization and normal progress through mitosis. This Mus musculus (Mouse) protein is Centromere protein W (Cenpw).